Consider the following 419-residue polypeptide: Glutamyl-tRNA reductase (419 aa).

Substrate-binding positions include 49-52 (TCNR), Ser-107, 112-114 (EPQ), and Gln-118. The active-site Nucleophile is Cys-50. NADP(+) is bound at residue 187–192 (GAGETI).

This sequence belongs to the glutamyl-tRNA reductase family. In terms of assembly, homodimer.

The catalysed reaction is (S)-4-amino-5-oxopentanoate + tRNA(Glu) + NADP(+) = L-glutamyl-tRNA(Glu) + NADPH + H(+). Its pathway is porphyrin-containing compound metabolism; protoporphyrin-IX biosynthesis; 5-aminolevulinate from L-glutamyl-tRNA(Glu): step 1/2. In terms of biological role, catalyzes the NADPH-dependent reduction of glutamyl-tRNA(Glu) to glutamate 1-semialdehyde (GSA). The protein is Glutamyl-tRNA reductase of Psychromonas ingrahamii (strain DSM 17664 / CCUG 51855 / 37).